The primary structure comprises 241 residues: Urease accessory protein UreF 1 (241 aa).

The protein belongs to the UreF family. As to quaternary structure, ureD, UreF and UreG form a complex that acts as a GTP-hydrolysis-dependent molecular chaperone, activating the urease apoprotein by helping to assemble the nickel containing metallocenter of UreC. The UreE protein probably delivers the nickel.

Its subcellular location is the cytoplasm. Functionally, required for maturation of urease via the functional incorporation of the urease nickel metallocenter. This chain is Urease accessory protein UreF 1, found in Brucella melitensis biotype 1 (strain ATCC 23456 / CCUG 17765 / NCTC 10094 / 16M).